Consider the following 609-residue polypeptide: Glutamine--fructose-6-phosphate aminotransferase [isomerizing] (609 aa).

Catalysis depends on C2, which acts as the Nucleophile; for GATase activity. One can recognise a Glutamine amidotransferase type-2 domain in the interval 2–218 (CGIVGAVAQR…EGDVVEVTRR (217 aa)). SIS domains lie at 286–426 (ADAL…LKGA) and 458–599 (LAEG…VDQP). K604 serves as the catalytic For Fru-6P isomerization activity.

Homodimer.

The protein resides in the cytoplasm. It catalyses the reaction D-fructose 6-phosphate + L-glutamine = D-glucosamine 6-phosphate + L-glutamate. Catalyzes the first step in hexosamine metabolism, converting fructose-6P into glucosamine-6P using glutamine as a nitrogen source. The chain is Glutamine--fructose-6-phosphate aminotransferase [isomerizing] from Yersinia pestis.